We begin with the raw amino-acid sequence, 297 residues long: MVEVRVPATSANIGPGFDCLGVAVNIYNKFFVEEIEEGLIFEGCADKFKNENNLIYVAMKKCFDKIGYKPTGLRIKIESDIPVSRGLGSSAACVVGGIVSANELAGGVLNKKELLDLAVGVEGHPDNVNPAFCGGMTASISDNREVIYSKVKVSEGIKFCALIPDFTLSTEKARAVLPKSIDYKDGIFNVGRTALMISALNNGDFHLIKYACKDKLHQDYRAKLIENFYSIKEECEKLNSLGVFLSGAGPTIMVMLKEEDKRFSKNIKSFLETLKNKWEVRELKIDKLGTVVNNRKV.

Residue Pro82–Ala92 coordinates ATP.

It belongs to the GHMP kinase family. Homoserine kinase subfamily.

Its subcellular location is the cytoplasm. It carries out the reaction L-homoserine + ATP = O-phospho-L-homoserine + ADP + H(+). It functions in the pathway amino-acid biosynthesis; L-threonine biosynthesis; L-threonine from L-aspartate: step 4/5. Functionally, catalyzes the ATP-dependent phosphorylation of L-homoserine to L-homoserine phosphate. This chain is Homoserine kinase, found in Clostridium botulinum (strain Kyoto / Type A2).